A 128-amino-acid polypeptide reads, in one-letter code: Ribosome-binding factor A (128 aa).

This sequence belongs to the RbfA family. As to quaternary structure, monomer. Binds 30S ribosomal subunits, but not 50S ribosomal subunits or 70S ribosomes.

It localises to the cytoplasm. Functionally, one of several proteins that assist in the late maturation steps of the functional core of the 30S ribosomal subunit. Associates with free 30S ribosomal subunits (but not with 30S subunits that are part of 70S ribosomes or polysomes). Required for efficient processing of 16S rRNA. May interact with the 5'-terminal helix region of 16S rRNA. This chain is Ribosome-binding factor A, found in Rippkaea orientalis (strain PCC 8801 / RF-1) (Cyanothece sp. (strain PCC 8801)).